Reading from the N-terminus, the 217-residue chain is tRNA (guanine-N(7)-)-methyltransferase (217 aa).

S-adenosyl-L-methionine-binding residues include Glu-43, Asp-68, Asn-101, and Asn-123. Lys-127 provides a ligand contact to substrate. An interaction with RNA region spans residues 129-134 (KHNKRR). Residues Asp-159 and 196–199 (TEYE) contribute to the substrate site.

Belongs to the class I-like SAM-binding methyltransferase superfamily. TrmB family.

It carries out the reaction guanosine(46) in tRNA + S-adenosyl-L-methionine = N(7)-methylguanosine(46) in tRNA + S-adenosyl-L-homocysteine. It participates in tRNA modification; N(7)-methylguanine-tRNA biosynthesis. Catalyzes the formation of N(7)-methylguanine at position 46 (m7G46) in tRNA. In Clostridium botulinum (strain Okra / Type B1), this protein is tRNA (guanine-N(7)-)-methyltransferase.